The sequence spans 214 residues: ATP phosphoribosyltransferase (214 aa).

Belongs to the ATP phosphoribosyltransferase family. Short subfamily. Heteromultimer composed of HisG and HisZ subunits.

The protein resides in the cytoplasm. It catalyses the reaction 1-(5-phospho-beta-D-ribosyl)-ATP + diphosphate = 5-phospho-alpha-D-ribose 1-diphosphate + ATP. Its pathway is amino-acid biosynthesis; L-histidine biosynthesis; L-histidine from 5-phospho-alpha-D-ribose 1-diphosphate: step 1/9. In terms of biological role, catalyzes the condensation of ATP and 5-phosphoribose 1-diphosphate to form N'-(5'-phosphoribosyl)-ATP (PR-ATP). Has a crucial role in the pathway because the rate of histidine biosynthesis seems to be controlled primarily by regulation of HisG enzymatic activity. This Lysinibacillus sphaericus (strain C3-41) protein is ATP phosphoribosyltransferase.